A 242-amino-acid polypeptide reads, in one-letter code: Biosynthetic peptidoglycan transglycosylase (242 aa).

Residues 19-39 (LMVVLAVFWGGGIALFSVAPV) form a helical membrane-spanning segment.

It belongs to the glycosyltransferase 51 family.

It localises to the cell inner membrane. It catalyses the reaction [GlcNAc-(1-&gt;4)-Mur2Ac(oyl-L-Ala-gamma-D-Glu-L-Lys-D-Ala-D-Ala)](n)-di-trans,octa-cis-undecaprenyl diphosphate + beta-D-GlcNAc-(1-&gt;4)-Mur2Ac(oyl-L-Ala-gamma-D-Glu-L-Lys-D-Ala-D-Ala)-di-trans,octa-cis-undecaprenyl diphosphate = [GlcNAc-(1-&gt;4)-Mur2Ac(oyl-L-Ala-gamma-D-Glu-L-Lys-D-Ala-D-Ala)](n+1)-di-trans,octa-cis-undecaprenyl diphosphate + di-trans,octa-cis-undecaprenyl diphosphate + H(+). It participates in cell wall biogenesis; peptidoglycan biosynthesis. In terms of biological role, peptidoglycan polymerase that catalyzes glycan chain elongation from lipid-linked precursors. The polypeptide is Biosynthetic peptidoglycan transglycosylase (Shigella dysenteriae serotype 1 (strain Sd197)).